Consider the following 221-residue polypeptide: Transmembrane protein 225B (221 aa).

A run of 4 transmembrane segments spans residues 14–34 (WAIVPALTSLGYLIILVVSIF), 77–97 (VFLLSAVFLAFVTTFIMMPFA), 109–129 (FVLACISFFTGACAFLALVLH), and 147–167 (VLWPYYVLGFGIFLFIVAGTI).

It localises to the membrane. The polypeptide is Transmembrane protein 225B (Homo sapiens (Human)).